A 295-amino-acid polypeptide reads, in one-letter code: Acetyl-coenzyme A carboxylase carboxyl transferase subunit beta (295 aa).

The segment at 1–20 (MSWLSKLMPSGIRTENTPAK) is disordered. Residues 28–295 (LWEKCSNCGS…QPHPQDADAA (268 aa)) enclose the CoA carboxyltransferase N-terminal domain. Zn(2+)-binding residues include Cys-32, Cys-35, Cys-51, and Cys-54. The segment at 32–54 (CSNCGSALYGPELEENLEVCPKC) adopts a C4-type zinc-finger fold.

This sequence belongs to the AccD/PCCB family. As to quaternary structure, acetyl-CoA carboxylase is a heterohexamer composed of biotin carboxyl carrier protein (AccB), biotin carboxylase (AccC) and two subunits each of ACCase subunit alpha (AccA) and ACCase subunit beta (AccD). Zn(2+) serves as cofactor.

It is found in the cytoplasm. It carries out the reaction N(6)-carboxybiotinyl-L-lysyl-[protein] + acetyl-CoA = N(6)-biotinyl-L-lysyl-[protein] + malonyl-CoA. The protein operates within lipid metabolism; malonyl-CoA biosynthesis; malonyl-CoA from acetyl-CoA: step 1/1. Its function is as follows. Component of the acetyl coenzyme A carboxylase (ACC) complex. Biotin carboxylase (BC) catalyzes the carboxylation of biotin on its carrier protein (BCCP) and then the CO(2) group is transferred by the transcarboxylase to acetyl-CoA to form malonyl-CoA. The protein is Acetyl-coenzyme A carboxylase carboxyl transferase subunit beta of Xanthomonas oryzae pv. oryzae (strain MAFF 311018).